Here is a 150-residue protein sequence, read N- to C-terminus: Ribosome maturation factor RimP (150 aa).

It belongs to the RimP family.

It is found in the cytoplasm. Functionally, required for maturation of 30S ribosomal subunits. The polypeptide is Ribosome maturation factor RimP (Methylococcus capsulatus (strain ATCC 33009 / NCIMB 11132 / Bath)).